The primary structure comprises 333 residues: UDP-N-acetylglucosamine 4,6-dehydratase (inverting) (333 aa).

Residues 19-22, 43-48, 67-68, Ala87, Lys91, and 129-130 each bind NADP(+); these read TGSF, SRDELK, DV, and LS. Lys91 lines the substrate pocket. Lys133 is a catalytic residue. NADP(+) contacts are provided by Tyr141 and Lys145. Asn173 is a binding site for substrate. 174–178 is an NADP(+) binding site; that stretch reads VVGSR. Positions 181, 199, 258, and 261 each coordinate substrate.

This sequence belongs to the polysaccharide synthase family. Homohexamer. NADP(+) is required as a cofactor.

It carries out the reaction UDP-N-acetyl-alpha-D-glucosamine = UDP-2-acetamido-2,6-dideoxy-beta-L-arabino-hex-4-ulose + H2O. Functionally, catalyzes the first step in the biosynthesis of pseudaminic acid, a sialic-acid-like sugar that is used to modify flagellin. Has both C6 dehydratase and C5 epimerase activities that result in the production of both UDP-2-acetamido-2,6-dideoxy-beta-L-arabino-4-hexulose and UDP-2-acetamido-2,6-dideoxy-alpha-D-xylo-4-hexulose. The chain is UDP-N-acetylglucosamine 4,6-dehydratase (inverting) (pseB) from Helicobacter pylori (strain ATCC 700392 / 26695) (Campylobacter pylori).